The chain runs to 208 residues: Imidazoleglycerol-phosphate dehydratase (208 aa).

Belongs to the imidazoleglycerol-phosphate dehydratase family.

It is found in the cytoplasm. The enzyme catalyses D-erythro-1-(imidazol-4-yl)glycerol 3-phosphate = 3-(imidazol-4-yl)-2-oxopropyl phosphate + H2O. Its pathway is amino-acid biosynthesis; L-histidine biosynthesis; L-histidine from 5-phospho-alpha-D-ribose 1-diphosphate: step 6/9. This chain is Imidazoleglycerol-phosphate dehydratase, found in Symbiobacterium thermophilum (strain DSM 24528 / JCM 14929 / IAM 14863 / T).